A 317-amino-acid chain; its full sequence is Lipoyl synthase (317 aa).

[4Fe-4S] cluster-binding residues include Cys-56, Cys-61, Cys-67, Cys-82, Cys-86, Cys-89, and Ser-298. The Radical SAM core domain maps to 68-287 (WEDREATFLI…KEEAEQIGFS (220 aa)).

Belongs to the radical SAM superfamily. Lipoyl synthase family. The cofactor is [4Fe-4S] cluster.

It localises to the cytoplasm. The catalysed reaction is [[Fe-S] cluster scaffold protein carrying a second [4Fe-4S](2+) cluster] + N(6)-octanoyl-L-lysyl-[protein] + 2 oxidized [2Fe-2S]-[ferredoxin] + 2 S-adenosyl-L-methionine + 4 H(+) = [[Fe-S] cluster scaffold protein] + N(6)-[(R)-dihydrolipoyl]-L-lysyl-[protein] + 4 Fe(3+) + 2 hydrogen sulfide + 2 5'-deoxyadenosine + 2 L-methionine + 2 reduced [2Fe-2S]-[ferredoxin]. It participates in protein modification; protein lipoylation via endogenous pathway; protein N(6)-(lipoyl)lysine from octanoyl-[acyl-carrier-protein]: step 2/2. In terms of biological role, catalyzes the radical-mediated insertion of two sulfur atoms into the C-6 and C-8 positions of the octanoyl moiety bound to the lipoyl domains of lipoate-dependent enzymes, thereby converting the octanoylated domains into lipoylated derivatives. The protein is Lipoyl synthase of Streptomyces coelicolor (strain ATCC BAA-471 / A3(2) / M145).